A 327-amino-acid chain; its full sequence is Methionyl-tRNA formyltransferase (327 aa).

Ser-122–Pro-125 is a binding site for (6S)-5,6,7,8-tetrahydrofolate.

This sequence belongs to the Fmt family.

It carries out the reaction L-methionyl-tRNA(fMet) + (6R)-10-formyltetrahydrofolate = N-formyl-L-methionyl-tRNA(fMet) + (6S)-5,6,7,8-tetrahydrofolate + H(+). Its function is as follows. Attaches a formyl group to the free amino group of methionyl-tRNA(fMet). The formyl group appears to play a dual role in the initiator identity of N-formylmethionyl-tRNA by promoting its recognition by IF2 and preventing the misappropriation of this tRNA by the elongation apparatus. This Ralstonia nicotianae (strain ATCC BAA-1114 / GMI1000) (Ralstonia solanacearum) protein is Methionyl-tRNA formyltransferase.